Here is a 388-residue protein sequence, read N- to C-terminus: S-adenosylmethionine synthase (388 aa).

H16 contacts ATP. D18 provides a ligand contact to Mg(2+). Residue E44 participates in K(+) binding. E57 and Q100 together coordinate L-methionine. Residues 100 to 110 (QSPEIAQGVDR) are flexible loop. Residues 165–167 (DAK), D240, 246–247 (RK), A263, and K267 each bind ATP. D240 is an L-methionine binding site. L-methionine is bound at residue K271.

It belongs to the AdoMet synthase family. Homotetramer; dimer of dimers. Mg(2+) serves as cofactor. It depends on K(+) as a cofactor.

It localises to the cytoplasm. It catalyses the reaction L-methionine + ATP + H2O = S-adenosyl-L-methionine + phosphate + diphosphate. It functions in the pathway amino-acid biosynthesis; S-adenosyl-L-methionine biosynthesis; S-adenosyl-L-methionine from L-methionine: step 1/1. Its function is as follows. Catalyzes the formation of S-adenosylmethionine (AdoMet) from methionine and ATP. The overall synthetic reaction is composed of two sequential steps, AdoMet formation and the subsequent tripolyphosphate hydrolysis which occurs prior to release of AdoMet from the enzyme. The polypeptide is S-adenosylmethionine synthase (Acinetobacter baumannii (strain AYE)).